Here is a 253-residue protein sequence, read N- to C-terminus: 5-oxoprolinase subunit A (253 aa).

It belongs to the LamB/PxpA family. Forms a complex composed of PxpA, PxpB and PxpC.

It carries out the reaction 5-oxo-L-proline + ATP + 2 H2O = L-glutamate + ADP + phosphate + H(+). Functionally, catalyzes the cleavage of 5-oxoproline to form L-glutamate coupled to the hydrolysis of ATP to ADP and inorganic phosphate. The polypeptide is 5-oxoprolinase subunit A (Bacillus cereus (strain ATCC 14579 / DSM 31 / CCUG 7414 / JCM 2152 / NBRC 15305 / NCIMB 9373 / NCTC 2599 / NRRL B-3711)).